Consider the following 134-residue polypeptide: ATP synthase epsilon chain (134 aa).

Belongs to the ATPase epsilon chain family. As to quaternary structure, F-type ATPases have 2 components, CF(1) - the catalytic core - and CF(0) - the membrane proton channel. CF(1) has five subunits: alpha(3), beta(3), gamma(1), delta(1), epsilon(1). CF(0) has three main subunits: a, b and c.

It is found in the cell inner membrane. Its function is as follows. Produces ATP from ADP in the presence of a proton gradient across the membrane. This chain is ATP synthase epsilon chain, found in Rhodospirillum rubrum (strain ATCC 11170 / ATH 1.1.1 / DSM 467 / LMG 4362 / NCIMB 8255 / S1).